The chain runs to 250 residues: MITSYFNKIEEILQIVLQKEENLLKQAAEKVAESIQNGGIIQLFGCGHSHLLTEEVFYRAGGLVPIKPILVEPLMLHEGAVRSSKLERQNDYADWFLQDQDLQANDVLIVLSTSGRNPVPVDVAAYGKEKGAFVIGVTSLEYSKSQPSRHKSGKHLYNSVDLVINNHSVKGDAVLSYEKVQVPFAPTSTVVGATILNSMFAEAIKRMADNGYEPPIFLSGNIDGADDHNQLLIERYQKRIPLLALDGDEA.

Residues 31-214 form the SIS domain; the sequence is VAESIQNGGI…KRMADNGYEP (184 aa).

This sequence belongs to the UPF0309 family.

This chain is UPF0309 protein BH0227, found in Halalkalibacterium halodurans (strain ATCC BAA-125 / DSM 18197 / FERM 7344 / JCM 9153 / C-125) (Bacillus halodurans).